Here is a 338-residue protein sequence, read N- to C-terminus: Dehydrogenase/reductase SDR family member 7 (338 aa).

An N-terminal signal peptide occupies residues 1–28 (MSWELLLWLLALCALILPLVQLLRFLRA). NAD(+) contacts are provided by S60 and I62. Substrate is bound at residue S190. 3 residues coordinate NAD(+): Y203, K207, and S239. Y203 acts as the Proton acceptor in catalysis.

This sequence belongs to the short-chain dehydrogenases/reductases (SDR) family.

It is found in the endoplasmic reticulum membrane. The catalysed reaction is all-trans-retinol + NADP(+) = all-trans-retinal + NADPH + H(+). It catalyses the reaction 5alpha-androstane-3alpha,17beta-diol + NADP(+) = 17beta-hydroxy-5alpha-androstan-3-one + NADPH + H(+). Functionally, NADPH-dependent oxidoreductase which catalyzes the reduction of a variety of compounds bearing carbonyl groups including steroids, retinoids and xenobiotics. Catalyzes the reduction/inactivation of 5alpha-dihydrotestosterone to 3alpha-androstanediol, with a possible role in the modulation of androgen receptor function. Involved in the reduction of all-trans-retinal to all-trans-retinol. Converts cortisone to 20beta-dihydrocortisone in vitro, although the physiological relevance of this activity is questionable. Reduces exogenous compounds such as quinones (1,2-naphtoquinone, 9,10-phenantrenequinone and benzoquinone) and other xenobiotics (alpha-diketones) in vitro, suggesting a role in the biotransformation of xenobiotics with carbonyl group. A dehydrogenase activity has not been detected so far. May play a role as tumor suppressor. The chain is Dehydrogenase/reductase SDR family member 7 from Mus musculus (Mouse).